The following is a 346-amino-acid chain: Lipase chaperone (346 aa).

The chain crosses the membrane as a helical span at residues 10-30 (TIVFGVITSVLLLLLLIYYVF).

This sequence belongs to the lipase chaperone family.

The protein resides in the cell inner membrane. In terms of biological role, may be involved in the folding of the extracellular lipase during its passage through the periplasm. This is Lipase chaperone (lifO) from Acinetobacter venetianus (strain ATCC 31012 / DSM 23050 / BCRC 14357 / CCUG 45561 / CIP 110063 / KCTC 2702 / LMG 19082 / RAG-1).